The primary structure comprises 103 residues: Matrix Gla protein (103 aa).

The N-terminal stretch at 1–19 is a signal peptide; it reads MKSLLLLSVLAALAVAALC. E21 carries the 4-carboxyglutamate modification. Phosphoserine occurs at positions 22, 25, and 28. In terms of domain architecture, Gla spans 51–97; the sequence is RAKAQERIRELNKPPYELNREACDDYKLCERYAMVYGYNAAYNRYFR. E56, E60, E67, and E71 each carry 4-carboxyglutamate. C73 and C79 are disulfide-bonded.

Belongs to the osteocalcin/matrix Gla protein family. Post-translationally, requires vitamin K-dependent gamma-carboxylation for its function.

Its subcellular location is the secreted. Associates with the organic matrix of bone and cartilage. Thought to act as an inhibitor of bone formation. This chain is Matrix Gla protein (MGP), found in Sus scrofa (Pig).